Consider the following 378-residue polypeptide: Queuine tRNA-ribosyltransferase (378 aa).

The active-site Proton acceptor is D89. Substrate-binding positions include 89-93 (DSGGF), D143, Q187, and G214. The interval 245 to 251 (GVGKPED) is RNA binding. D264 acts as the Nucleophile in catalysis. An RNA binding; important for wobble base 34 recognition region spans residues 269–273 (TRNAR). Zn(2+) contacts are provided by C302, C304, C307, and H333.

It belongs to the queuine tRNA-ribosyltransferase family. In terms of assembly, homodimer. Within each dimer, one monomer is responsible for RNA recognition and catalysis, while the other monomer binds to the replacement base PreQ1. Zn(2+) serves as cofactor.

The catalysed reaction is 7-aminomethyl-7-carbaguanine + guanosine(34) in tRNA = 7-aminomethyl-7-carbaguanosine(34) in tRNA + guanine. Its pathway is tRNA modification; tRNA-queuosine biosynthesis. In terms of biological role, catalyzes the base-exchange of a guanine (G) residue with the queuine precursor 7-aminomethyl-7-deazaguanine (PreQ1) at position 34 (anticodon wobble position) in tRNAs with GU(N) anticodons (tRNA-Asp, -Asn, -His and -Tyr). Catalysis occurs through a double-displacement mechanism. The nucleophile active site attacks the C1' of nucleotide 34 to detach the guanine base from the RNA, forming a covalent enzyme-RNA intermediate. The proton acceptor active site deprotonates the incoming PreQ1, allowing a nucleophilic attack on the C1' of the ribose to form the product. After dissociation, two additional enzymatic reactions on the tRNA convert PreQ1 to queuine (Q), resulting in the hypermodified nucleoside queuosine (7-(((4,5-cis-dihydroxy-2-cyclopenten-1-yl)amino)methyl)-7-deazaguanosine). The protein is Queuine tRNA-ribosyltransferase of Aeromonas hydrophila subsp. hydrophila (strain ATCC 7966 / DSM 30187 / BCRC 13018 / CCUG 14551 / JCM 1027 / KCTC 2358 / NCIMB 9240 / NCTC 8049).